We begin with the raw amino-acid sequence, 567 residues long: Frizzled-7 (567 aa).

Residues 1 to 31 (MRPAAGEAGAGLRWLGLAALLAALLGTPCAA) form the signal peptide. Residues 32–250 (AHHEDKAISV…EAEVRFARLW (219 aa)) lie on the Extracellular side of the membrane. An FZ domain is found at 42-161 (PDHGFCQPIS…HGAGEICVGQ (120 aa)). 5 disulfide bridges follow: Cys47-Cys108, Cys55-Cys101, Cys92-Cys129, Cys118-Cys158, and Cys122-Cys146. A glycan (N-linked (GlcNAc...) asparagine) is linked at Asn61. Asn162 carries N-linked (GlcNAc...) asparagine glycosylation. Residues 251-271 (VGVWSVLCCASTLFTVLTYLV) form a helical membrane-spanning segment. Residues 272–282 (DMRRFSYPERP) lie on the Cytoplasmic side of the membrane. A helical membrane pass occupies residues 283–303 (IIFLSGCYFMVAVAYAAGFLL). Over 304 to 330 (EERVVCLERFSEDGYRTVAQGTKKEGC) the chain is Extracellular. The helical transmembrane segment at 331 to 351 (TILFMILYFFGMASSIWWVIL) threads the bilayer. Residues 352-373 (SLTWFLAAGMKWGHEAIEANSQ) are Cytoplasmic-facing. A helical membrane pass occupies residues 374-394 (YFHLAAWAVPAVKTITILAMG). The Extracellular portion of the chain corresponds to 395–417 (QVDGDVLSGVCYVGIYSVDSLRG). The chain crosses the membrane as a helical span at residues 418–438 (FVLAPLFVYLFIGTSFLLAGF). Residues 439-464 (VSLFRIRTIMKHDGTKTEKLEKLMVR) are Cytoplasmic-facing. Residues 465–485 (IGVFSVLYTVPATIVVACYFY) traverse the membrane as a helical segment. Residues 486 to 521 (EQAFRSTWEKTWLLQTCKTYAVPCPSHFAPMSPDFT) are Extracellular-facing. A helical transmembrane segment spans residues 522 to 542 (VFMIKYLMTMIVGITTGFWIW). The Cytoplasmic portion of the chain corresponds to 543 to 567 (SGKTLQSWRRFYHRLSTGSKGETAV). The Lys-Thr-X-X-X-Trp motif, mediates interaction with the PDZ domain of Dvl family members signature appears at 545-550 (KTLQSW). The PDZ-binding signature appears at 565–567 (TAV).

Belongs to the G-protein coupled receptor Fz/Smo family. In terms of tissue distribution, expressed broadly in cranial ectoderm. Also expressed in the developing somites and in other cranial placodes, including the olfactory, lens, otic placodes (lateral half of the vesicle) and epibranchial placodes. Low level of expression in all the mesoderm derivatives in the limb buds.

Its subcellular location is the cell membrane. It is found in the endosome membrane. In terms of biological role, receptor for Wnt proteins. Most of frizzled receptors are coupled to the beta-catenin canonical signaling pathway, which leads to the activation of disheveled proteins, inhibition of GSK-3 kinase, nuclear accumulation of beta-catenin and activation of Wnt target genes. A second signaling pathway involving PKC and calcium fluxes has been seen for some family members, but it is not yet clear if it represents a distinct pathway or if it can be integrated in the canonical pathway, as PKC seems to be required for Wnt-mediated inactivation of GSK-3 kinase. Both pathways seem to involve interactions with G-proteins. May be involved in transduction and intercellular transmission of polarity information during tissue morphogenesis and/or in differentiated tissues. This is Frizzled-7 (FZD7) from Gallus gallus (Chicken).